Reading from the N-terminus, the 315-residue chain is Olfactory receptor 4A5 (315 aa).

Topologically, residues 1–23 are extracellular; that stretch reads MRQNNNITEFVLLGFSQDPGVQK. Residue Asn6 is glycosylated (N-linked (GlcNAc...) asparagine). A helical membrane pass occupies residues 24–47; the sequence is ALFVMFLLTYLVTVVGNLLIVVDI. Residues 48-55 are Cytoplasmic-facing; it reads IASPSLGS. The chain crosses the membrane as a helical span at residues 56–77; the sequence is PMYFFLACLSFIDAAYSTTISP. Topologically, residues 78–98 are extracellular; it reads KLIVGLFCDKKTISFQGCMGQ. A disulfide bond links Cys95 and Cys186. A helical transmembrane segment spans residues 99–118; it reads LFIDHFFGGAEVFLLVVMAC. The Cytoplasmic segment spans residues 119–137; that stretch reads DRYVAICKPLHYLTIMNRQ. Residues 138-156 form a helical membrane-spanning segment; sequence VCFLLLVVAMIGGFVHSAF. Topologically, residues 157 to 192 are extracellular; sequence QIVVYSLPFCGPNVIVHFSCDMHPLLELACTDTYFI. Residues 193–216 traverse the membrane as a helical segment; sequence GLTVVVNSGAICMVIFNLLLISYG. Over 217–232 the chain is Cytoplasmic; that stretch reads VILSSLKTYSQEKRGK. Residues 233–255 traverse the membrane as a helical segment; sequence ALSTCSSGSTVVVLFFVPCIFIY. At 256–266 the chain is on the extracellular side; the sequence is VRPVSNFPTDK. A helical transmembrane segment spans residues 267-286; it reads FMTVFYTIITHMLSPLIYTL. Over 287–315 the chain is Cytoplasmic; it reads RNSEMRNAIEKLLGKKLTIFIIGGVSVLM.

Belongs to the G-protein coupled receptor 1 family.

The protein resides in the cell membrane. Its function is as follows. Odorant receptor. The chain is Olfactory receptor 4A5 (OR4A5) from Homo sapiens (Human).